A 1019-amino-acid polypeptide reads, in one-letter code: MLLLNYTQNFQLITFLLFPFINTFDYNCLKPTTTTTTSPTSSKLGFLNRSKSNSNININELKNKFLEQQQEGSISNIAGVATTQQNPSIVINSSSSSSSSSSHHPHHQKTPSNSSSNFNLIKASFNQIGVAFNNNISPRSNRKEKEKDKDKDHQDNSNINNINNINNNINNNINNNNNNNNNNNNNNNMHNPTSSSPSINNNLKGKNVASIIAANGANLNNSLSNLHQHVNNNSNNNLTNSFNSVSHNNISISSGGSALSYNYTQQLNQNGGSNNGSTSNSTSNSANNSLLSLASSINGNIGSDENGSNVMYGGDIASSYHSMSIDPLKSSTNTETIEIMVVGDELSNKARFISSFLNNGIGEDPTLEISTKKSIAIQSGAYNVNINTTVGQEEFWGINDVYYRSSQGFIFVYNVNSRESFLSFLKFRDKIIHEKGTENILMAMVGLTSPLINQESGEESCIREVTQQEAKRMADLYSCSFVELNSFGLDCEHQIQSIVTDLLGRITSGLSSTNNNNSGNNSNNNNGNSNGNSSNNNSNNNSTNNLNNSAILNESIAQSIEVLMLGDIFVGKTQIIQRLLGNPFQNAYKETTEWNRNVYQMTVNDVRYLLKIVDTCGLDIEETLNRERLVSTQGFIFVYSIASRESFLMIEQLRKKLSSIKSETKIPSVLIANKGDSLIRQVTFDEGSKMAQHLGSHYFEVSSMFSDDESIGRPFEQLLIDIQKSGNASGFEPSEIKKKGYLFKEGKKLKSMSKYFFKASRGNLSYCKNESNKSKVKSIQLSEQIQLAIPHNVHEKKDVWPFSIILDPVSKHSINLIASTEEERNAWIKAIKFNCFLEDITSNIIDDVVKSMVSEIASGVAGSGSNNGNNNGHLKRSDTTQQLNNSGSFINGINANKPVPNFSNLSISGGGSSNNSNNSTPMSSPYGSSNNFSSHLSQSTSSMSMSPQQQLQSVLLSSSNLSSSMNSSFSYSSSISSSYTDSMSGSPPDSNGQVFPQSPQLKKTLFQRTTSFSKGSKLK.

Disordered regions lie at residues 89 to 118, 131 to 202, 265 to 287, and 512 to 546; these read IVIN…SSNF, AFNN…INNN, QQLN…NSAN, and STNN…TNNL. Over residues 93-102 the composition is skewed to low complexity; sequence SSSSSSSSSS. The segment covering 141-155 has biased composition (basic and acidic residues); that stretch reads NRKEKEKDKDKDHQD. A coiled-coil region spans residues 158–188; the sequence is NINNINNINNNINNNINNNNNNNNNNNNNNN. Residues 158 to 202 show a composition bias toward low complexity; sequence NINNINNINNNINNNINNNNNNNNNNNNNNNMHNPTSSSPSINNN. The PH domain occupies 735–836; it reads EIKKKGYLFK…WIKAIKFNCF (102 aa). The span at 860-872 shows a compositional bias: low complexity; it reads VAGSGSNNGNNNG. 3 disordered regions span residues 860–890, 904–951, and 977–1019; these read VAGS…GSFI, NLSI…QQQL, and SSYT…SKLK. Polar residues predominate over residues 879–890; sequence TTQQLNNSGSFI. A compositionally biased stretch (low complexity) spans 977-986; sequence SSYTDSMSGS. The segment covering 987 to 1019 has biased composition (polar residues); it reads PPDSNGQVFPQSPQLKKTLFQRTTSFSKGSKLK.

As to quaternary structure, component of the Sca1 complex composed of at least gefA, gefH, scaA, phr, and the protein phosphatase 2A subunits pppA and pho2B. Interacts directly with gefH.

Its subcellular location is the cell membrane. Functionally, component of the Sca1 complex, a regulator of cell motility, chemotaxis and signal relay. The Sca1 complex is recruited to the plasma membrane in a chemoattractant- and F-actin-dependent manner and is enriched at the leading edge of chemotaxing cells where it regulates F-actin dynamics and signal relay by controlling the activation of rasC and the downstream target of rapamycin complex 2 (TORC2)-Akt/protein kinase B (PKB) pathway. This chain is Sca1 complex protein phr, found in Dictyostelium discoideum (Social amoeba).